The following is a 206-amino-acid chain: Large ribosomal subunit protein uL4 (206 aa).

The interval 47–94 (NRAQKDRSEINKSTKKPFRQKGTGRARAGRASSPLWRGGGKVFPNSPD) is disordered. Over residues 49–58 (AQKDRSEINK) the composition is skewed to basic and acidic residues. The span at 59-74 (STKKPFRQKGTGRARA) shows a compositional bias: basic residues.

Belongs to the universal ribosomal protein uL4 family. In terms of assembly, part of the 50S ribosomal subunit.

One of the primary rRNA binding proteins, this protein initially binds near the 5'-end of the 23S rRNA. It is important during the early stages of 50S assembly. It makes multiple contacts with different domains of the 23S rRNA in the assembled 50S subunit and ribosome. Functionally, forms part of the polypeptide exit tunnel. This is Large ribosomal subunit protein uL4 from Laribacter hongkongensis (strain HLHK9).